We begin with the raw amino-acid sequence, 77 residues long: Defensin-B6 (77 aa).

Positions 1–20 (MKTLFFLSVFIFLLLHLSPG) are cleaved as a signal peptide. Cystine bridges form between cysteine 43/cysteine 70, cysteine 50/cysteine 64, and cysteine 54/cysteine 71.

It belongs to the beta-defensin family. Lowly expressed in spleen, kidney and lung.

The protein localises to the secreted. Functionally, has antimicrobial activity. This chain is Defensin-B6, found in Ornithorhynchus anatinus (Duckbill platypus).